The following is a 61-amino-acid chain: Small ribosomal subunit protein bS21 (61 aa).

Belongs to the bacterial ribosomal protein bS21 family.

The chain is Small ribosomal subunit protein bS21 from Methylacidiphilum infernorum (isolate V4) (Methylokorus infernorum (strain V4)).